The primary structure comprises 232 residues: Small ribosomal subunit protein uS5 (232 aa).

The segment at 1 to 47 is disordered; sequence MAAEVTETAQPVETAASTDNNREQREPRRGGRERNPNRDRGNRDADK. Positions 7–19 are enriched in polar residues; sequence ETAQPVETAASTD. Residues 20–47 show a composition bias toward basic and acidic residues; the sequence is NNREQREPRRGGRERNPNRDRGNRDADK. Residues 50–113 form the S5 DRBM domain; sequence FLERVVTINR…EEAKKNFFRV (64 aa).

This sequence belongs to the universal ribosomal protein uS5 family. As to quaternary structure, part of the 30S ribosomal subunit. Contacts proteins S4 and S8.

Functionally, with S4 and S12 plays an important role in translational accuracy. Its function is as follows. Located at the back of the 30S subunit body where it stabilizes the conformation of the head with respect to the body. The sequence is that of Small ribosomal subunit protein uS5 from Leifsonia xyli subsp. xyli (strain CTCB07).